Reading from the N-terminus, the 277-residue chain is Large ribosomal subunit protein uL2 (277 aa).

Disordered stretches follow at residues 37–60 (KNST…GHKH) and 223–264 (VVMN…NKRT). The segment covering 39–49 (STAGRNNNGHI) has biased composition (polar residues). Residues 50-60 (TTRHKGGGHKH) are compositionally biased toward basic residues. Residues 229-244 (DHPHGGGEGRTGEARE) show a composition bias toward basic and acidic residues.

The protein belongs to the universal ribosomal protein uL2 family. As to quaternary structure, part of the 50S ribosomal subunit. Forms a bridge to the 30S subunit in the 70S ribosome.

In terms of biological role, one of the primary rRNA binding proteins. Required for association of the 30S and 50S subunits to form the 70S ribosome, for tRNA binding and peptide bond formation. It has been suggested to have peptidyltransferase activity; this is somewhat controversial. Makes several contacts with the 16S rRNA in the 70S ribosome. The sequence is that of Large ribosomal subunit protein uL2 from Neisseria meningitidis serogroup B (strain ATCC BAA-335 / MC58).